The following is a 1144-amino-acid chain: Nitric oxide synthase, inducible (1144 aa).

A DINNN-motif; mediates interaction with SPSB1, SPSB2 and SPSB4 motif is present at residues 23 to 27 (DINNN). The segment at 37-59 (SPTIQDDPKSHQNGSPQLLTGTA) is disordered. The span at 47-59 (HQNGSPQLLTGTA) shows a compositional bias: polar residues. C104 and C109 together coordinate Zn(2+). S112 contacts (6R)-L-erythro-5,6,7,8-tetrahydrobiopterin. C194 serves as a coordination point for heme b. Positions 257, 366, 367, and 371 each coordinate L-arginine. Positions 375, 456, 457, and 470 each coordinate (6R)-L-erythro-5,6,7,8-tetrahydrobiopterin. Heme b is bound at residue Y485. The segment at 509–529 (FRVLVKVVFFASMLMRKVMAS) is calmodulin-binding. A Flavodoxin-like domain is found at 533–671 (ATVLFATETG…AFRSWAVQTF (139 aa)). 5 residues coordinate FMN: T539, E540, T541, K543, and S544. Y569 bears the Phosphotyrosine mark. Residues S585, T586, S622, C629, E655, and Q659 each coordinate FMN. The FAD-binding FR-type domain occupies 724–964 (KNVFTMRLKS…VRSVSGFQLP (241 aa)). R744 lines the NADP(+) pocket. Residues H766, R900, Y902, S903, T918, and A920 each coordinate FAD. NADP(+) is bound at residue T923. Positions 924, 937, 938, and 939 each coordinate FAD. Positions 978, 1011, 1040, 1041, 1047, 1049, 1051, and 1084 each coordinate NADP(+).

The protein belongs to the NOS family. Homodimer. Interacts with NHERF1. Interacts with GAPDH. Interacts with S100A8 and S100A9 to form the iNOS-S100A8/9 transnitrosylase complex. Interacts with SPSB1, SPSB2 and SPSB4. Interacts with ELOC and CUL5 in the presence of SPSB1 or SPSB2 or SPSB4. Forms a complex with ASL, ASS1 and HSP90AA1; the complex regulates cell-autonomous L-arginine synthesis and citrulline recycling while channeling extracellular L-arginine to nitric oxide synthesis pathway. The cofactor is heme b. FAD serves as cofactor. Requires FMN as cofactor. It depends on (6R)-L-erythro-5,6,7,8-tetrahydrobiopterin as a cofactor. Post-translationally, polyubiquitinated; mediated by SPSB1, SPSB2 and SPSB4, leading to proteasomal degradation. In terms of tissue distribution, macrophages.

It is found in the cytoplasm. The protein resides in the cytosol. The catalysed reaction is 2 L-arginine + 3 NADPH + 4 O2 + H(+) = 2 L-citrulline + 2 nitric oxide + 3 NADP(+) + 4 H2O. With respect to regulation, not stimulated by calcium/calmodulin. Aspirin inhibits expression and function of this enzyme and effects may be exerted at the level of translational/post-translational modification and directly on the catalytic activity. Functionally, produces nitric oxide (NO) which is a messenger molecule with diverse functions throughout the body. In macrophages, NO mediates tumoricidal and bactericidal actions. Also has nitrosylase activity and mediates cysteine S-nitrosylation of cytoplasmic target proteins such PTGS2/COX2. As component of the iNOS-S100A8/9 transnitrosylase complex involved in the selective inflammatory stimulus-dependent S-nitrosylation of GAPDH implicated in regulation of the GAIT complex activity and probably multiple targets including ANXA5, EZR, MSN and VIM. Involved in inflammation, enhances the synthesis of pro-inflammatory mediators such as IL6 and IL8. This Mus musculus (Mouse) protein is Nitric oxide synthase, inducible (Nos2).